A 568-amino-acid polypeptide reads, in one-letter code: PTS system lactose-specific EIICB component (568 aa).

Residues 8-409 (IEKGKPFFEK…LVDTVIYYPF (402 aa)) form the PTS EIIC type-3 domain. Transmembrane regions (helical) follow at residues 30 to 50 (GFIS…IAYV), 65 to 85 (MLMT…AGTT), 103 to 123 (INFI…AADP), 128 to 148 (GFLS…AAFI), 183 to 203 (FAFS…VIGV), 222 to 242 (GYLG…VGIH), 246 to 266 (IVEP…AHLI), 283 to 303 (FIVT…FMWL), 339 to 359 (VFFI…KFFV), and 381 to 401 (IVLG…LILV). The PTS EIIB type-3 domain occupies 465–568 (ETNVLVLCAG…LAFVEEQFKD (104 aa)). The Phosphocysteine intermediate; for EIIB activity role is filled by C472. C472 carries the post-translational modification Phosphocysteine; by EIIA.

It localises to the cell membrane. It carries out the reaction lactose(out) + N(pros)-phospho-L-histidyl-[protein] = lactose 6-phosphate(in) + L-histidyl-[protein]. The phosphoenolpyruvate-dependent sugar phosphotransferase system (sugar PTS), a major carbohydrate active transport system, catalyzes the phosphorylation of incoming sugar substrates concomitantly with their translocation across the cell membrane. The enzyme II LacEF PTS system is involved in lactose transport. This Streptococcus mutans serotype c (strain ATCC 700610 / UA159) protein is PTS system lactose-specific EIICB component.